We begin with the raw amino-acid sequence, 412 residues long: B3 domain-containing protein Os02g0683500 (412 aa).

The disordered stretch occupies residues 1–87 (MEFTTSSRFS…GGGGGGGGEA (87 aa)). Residues 30 to 65 (TATAEAAPAPTSSSSSPAHHAASASASASASGSSTP) show a composition bias toward low complexity. Residues 73–86 (GASGSGGGGGGGGE) are compositionally biased toward gly residues. The TF-B3 DNA-binding region spans 96 to 200 (FDKVVTPSDV…RHRLFIDWKR (105 aa)). The disordered stretch occupies residues 374–412 (RLLELPPHHHHGAESSAASSPSSSSSSKRDAHSALDLDL). Over residues 387–399 (ESSAASSPSSSSS) the composition is skewed to low complexity. Over residues 400 to 412 (SKRDAHSALDLDL) the composition is skewed to basic and acidic residues.

It localises to the nucleus. This chain is B3 domain-containing protein Os02g0683500, found in Oryza sativa subsp. japonica (Rice).